Consider the following 211-residue polypeptide: Small ribosomal subunit protein eS1 (211 aa).

This sequence belongs to the eukaryotic ribosomal protein eS1 family.

The sequence is that of Small ribosomal subunit protein eS1 from Archaeoglobus fulgidus (strain ATCC 49558 / DSM 4304 / JCM 9628 / NBRC 100126 / VC-16).